Consider the following 477-residue polypeptide: TNF receptor-associated factor family protein DDB_G0278133 (477 aa).

The segment at 45–88 (CDICTLELFIESEPKALQCKEGHLACRRCWERYLSTNKQCMTCK) adopts an RING-type; degenerate zinc-finger fold. TRAF-type zinc fingers lie at residues 160–211 (NHYK…SSLS) and 212–267 (DHHK…SKMQ). Positions 271–326 (LEHSVTKLMNQNEIIKKDNQNLDQEKKIEEIKLKLNNLLNNYIQLKNEIAVLKQNS) form a coiled coil. Positions 331-463 (VYSNKWIIPE…FLNEKGELEI (133 aa)) constitute an MATH domain.

It belongs to the TNF receptor-associated factor family. A subfamily.

The protein localises to the cytoplasm. Its function is as follows. Probable adapter protein and signal transducer that links members of the tumor necrosis factor receptor family to different signaling pathways by association with the receptor cytoplasmic domain and kinases. In Dictyostelium discoideum (Social amoeba), this protein is TNF receptor-associated factor family protein DDB_G0278133.